The sequence spans 112 residues: uncharacterized protein (112 aa).

2 coiled-coil regions span residues 15 to 53 (AEKKISEERRESTTQTAEELKVPSMEKELEELRREFFKF) and 86 to 103 (LDYEIKVLEERVKETERK).

This is an uncharacterized protein from Aquifex aeolicus (strain VF5).